Consider the following 84-residue polypeptide: uncharacterized protein (84 aa).

2 stretches are compositionally biased toward basic residues: residues 1–15 (MPPH…HGHH) and 67–84 (HHGH…GHFF). Disordered stretches follow at residues 1 to 22 (MPPH…TYTT) and 64 to 84 (TSHH…GHFF).

This is an uncharacterized protein from Dictyostelium discoideum (Social amoeba).